A 620-amino-acid chain; its full sequence is Translation initiation factor IF-2 (620 aa).

The region spanning 119 to 288 (ERPPIVTIMG…IILISELENL (170 aa)) is the tr-type G domain. The G1 stretch occupies residues 128 to 135 (GHVDHGKT). 128–135 (GHVDHGKT) contacts GTP. The G2 stretch occupies residues 153–157 (GITQA). The interval 175 to 178 (DTPG) is G3. Residues 175 to 179 (DTPGH) and 229 to 232 (NKID) contribute to the GTP site. The interval 229–232 (NKID) is G4. The G5 stretch occupies residues 265–267 (SAI).

Belongs to the TRAFAC class translation factor GTPase superfamily. Classic translation factor GTPase family. IF-2 subfamily.

The protein resides in the cytoplasm. Functionally, one of the essential components for the initiation of protein synthesis. Protects formylmethionyl-tRNA from spontaneous hydrolysis and promotes its binding to the 30S ribosomal subunits. Also involved in the hydrolysis of GTP during the formation of the 70S ribosomal complex. This Mycoplasma mycoides subsp. mycoides SC (strain CCUG 32753 / NCTC 10114 / PG1) protein is Translation initiation factor IF-2.